Reading from the N-terminus, the 425-residue chain is Glutamyl-tRNA reductase (425 aa).

Substrate-binding positions include 47–50 (TCNR), S107, 112–114 (EDQ), and Q118. C48 functions as the Nucleophile in the catalytic mechanism. Position 187-192 (187-192 (GAGHIA)) interacts with NADP(+).

The protein belongs to the glutamyl-tRNA reductase family. As to quaternary structure, homodimer.

The catalysed reaction is (S)-4-amino-5-oxopentanoate + tRNA(Glu) + NADP(+) = L-glutamyl-tRNA(Glu) + NADPH + H(+). The protein operates within porphyrin-containing compound metabolism; protoporphyrin-IX biosynthesis; 5-aminolevulinate from L-glutamyl-tRNA(Glu): step 1/2. It participates in porphyrin-containing compound metabolism; chlorophyll biosynthesis. In terms of biological role, catalyzes the NADPH-dependent reduction of glutamyl-tRNA(Glu) to glutamate 1-semialdehyde (GSA). The sequence is that of Glutamyl-tRNA reductase from Roseiflexus sp. (strain RS-1).